Consider the following 191-residue polypeptide: MAP6 domain-containing protein 1 (191 aa).

S-palmitoyl cysteine attachment occurs at residues C5, C10, and C11. The tract at residues 31-106 (HGYSDPGSEE…RGQSSAPPTR (76 aa)) is disordered. Residues S38 and S41 each carry the phosphoserine modification. 2 mn regions span residues 123 to 136 (TTSY…WTGV) and 158 to 170 (DPSP…VPEV). S160 is subject to Phosphoserine.

It belongs to the STOP family. Interacts with calmodulin. In terms of processing, palmitoylated. Palmitoylation enhances association with microtubules. In terms of tissue distribution, expressed in brain. Found in neurons in primary cultures, but absent in glial cells.

It is found in the golgi apparatus. The protein resides in the cytoplasm. It localises to the cytoskeleton. In terms of biological role, may have microtubule-stabilizing activity. The chain is MAP6 domain-containing protein 1 (Map6d1) from Mus musculus (Mouse).